Reading from the N-terminus, the 654-residue chain is Neuroendocrine convertase 2 (654 aa).

A signal peptide spans 1 to 21; that stretch reads MAAATWSWLLAPFLLLHWASA. Positions 22–121 are excised as a propeptide; that stretch reads GAGGGAGGSG…VQQPGFKRVK (100 aa). The region spanning 158–483 is the Peptidase S8 domain; that stretch reads QWYLKNTGQN…FGVLDAGAMV (326 aa). Asn189 is a glycosylation site (N-linked (GlcNAc...) asparagine). Catalysis depends on charge relay system residues Asp196 and His237. 2 disulfides stabilise this stretch: Cys254–Cys404 and Cys346–Cys376. N-linked (GlcNAc...) asparagine glycosylation is present at Asn312. Ser412 functions as the Charge relay system in the catalytic mechanism. Positions 491–627 constitute a P/Homo B domain; it reads SVPPRYHCEA…SLVLHGTKEA (137 aa). Cysteines 498 and 524 form a disulfide. A glycan (N-linked (GlcNAc...) asparagine) is linked at Asn544.

The protein belongs to the peptidase S8 family. Furin subfamily. In terms of tissue distribution, expressed in the central nervous system (CNS) and midgut endocrine cells of third instar larva (at protein level). In the CNS, expressed in the CA-LP1 and CA-LP2 neurons which innervate the corpus allatum, and in the CC-MS2 neurons which innervate the corpora cardiaca of the ring gland. Also expressed in the CC-MS1, SP3, Tv and Va neurons. Expressed in Akh-producing cells of the corpora cardiaca. In the embryo, restricted to the final stages of embryogenesis where expression is found in anterior sensory structures and in only 168 cells in the brain and ventral nerve cord. After larvae hatch, the sensory structures and most cells in the CNS turn off or substantially reduce expression. In third instar larva, expressed at higher levels in the anterior section than in the posterior section. Little expression is detected in the adult head. In the developing eye, expressed at higher levels in pale-type R7 photoreceptor cells than in yellow-type R7 cells although expression is not seen in all pale-type R7 cells. Also expressed in outer photoreceptor cells.

Its subcellular location is the secreted. The catalysed reaction is Release of protein hormones and neuropeptides from their precursors, generally by hydrolysis of -Lys-Arg-|- bonds.. Its function is as follows. Serine endopeptidase which is involved in the processing of hormone and other protein precursors at sites comprised of pairs of basic amino acid residues. Required during embryonic and larval development, probably by proteolytically processing peptide hormones involved in hatching, larval growth and larval molting. Required for the processing and activation of Akh which maintains normal hemolymph sugar levels. Has been shown in one study to be required for processing of sli into slit N-product and slit C-product in the embryo which is necessary for lateral transverse muscle elongation but has been shown in another study not to be required for sli cleavage. Required for larval hatching. Also required for normal larval wandering behavior which occurs prior to pupariation. Required during pupal development for head eversion, leg and wing disk extension, and abdominal differentiation. Required during eye development for R8 photoreceptor cell specification by regulating processing of ligands required for the BMP and activin signaling pathways. The sequence is that of Neuroendocrine convertase 2 from Drosophila melanogaster (Fruit fly).